Consider the following 86-residue polypeptide: U15-lycotoxin-Ls1d (86 aa).

An N-terminal signal peptide occupies residues 1–20; the sequence is MNSKIFAVLLLLALLSCVLS. A WAP domain is found at 21–66; sequence DQYCPKSSITACKKMNIRNDCCKDDDCTGGSWCCATPCGNFCKYPT. 5 cysteine pairs are disulfide-bonded: Cys-24/Cys-54, Cys-32/Cys-58, Cys-41/Cys-53, Cys-42/Cys-80, and Cys-47/Cys-62.

This sequence belongs to the venom protein 11 family. 01 (wap-1) subfamily. Contains 5 disulfide bonds. As to expression, expressed by the venom gland.

Its subcellular location is the secreted. Its function is as follows. Has antibacterial activity. This chain is U15-lycotoxin-Ls1d, found in Lycosa singoriensis (Wolf spider).